The sequence spans 261 residues: Probable glutathione-independent glyoxalase hsp3103 (261 aa).

Active-site residues include Cys162, His163, and Glu196.

Belongs to the peptidase C56 family. HSP31-like subfamily.

It carries out the reaction methylglyoxal + H2O = (R)-lactate + H(+). Functionally, catalyzes the conversion of methylglyoxal (MG) to D-lactate in a single glutathione (GSH)-independent step. May play a role in detoxifying endogenously produced glyoxals. Involved in protection against reactive oxygen species (ROS). This chain is Probable glutathione-independent glyoxalase hsp3103, found in Schizosaccharomyces pombe (strain 972 / ATCC 24843) (Fission yeast).